The sequence spans 274 residues: NADPH-dependent 7-cyano-7-deazaguanine reductase (274 aa).

80-82 provides a ligand contact to substrate; that stretch reads VES. 82–83 serves as a coordination point for NADPH; sequence SK. Residue Cys181 is the Thioimide intermediate of the active site. Asp188 functions as the Proton donor in the catalytic mechanism. 220-221 provides a ligand contact to substrate; it reads HE. 249–250 is an NADPH binding site; the sequence is RG.

This sequence belongs to the GTP cyclohydrolase I family. QueF type 2 subfamily. As to quaternary structure, homodimer.

The protein resides in the cytoplasm. The catalysed reaction is 7-aminomethyl-7-carbaguanine + 2 NADP(+) = 7-cyano-7-deazaguanine + 2 NADPH + 3 H(+). It participates in tRNA modification; tRNA-queuosine biosynthesis. Catalyzes the NADPH-dependent reduction of 7-cyano-7-deazaguanine (preQ0) to 7-aminomethyl-7-deazaguanine (preQ1). This Burkholderia vietnamiensis (strain G4 / LMG 22486) (Burkholderia cepacia (strain R1808)) protein is NADPH-dependent 7-cyano-7-deazaguanine reductase.